Reading from the N-terminus, the 680-residue chain is DNA-directed RNA polymerase subunit beta' (680 aa).

Residues cysteine 69, cysteine 71, cysteine 87, and cysteine 90 each coordinate Zn(2+). Mg(2+) is bound by residues aspartate 489, aspartate 491, and aspartate 493.

The protein belongs to the RNA polymerase beta' chain family. RpoC1 subfamily. In terms of assembly, in plastids the minimal PEP RNA polymerase catalytic core is composed of four subunits: alpha, beta, beta', and beta''. When a (nuclear-encoded) sigma factor is associated with the core the holoenzyme is formed, which can initiate transcription. Mg(2+) serves as cofactor. It depends on Zn(2+) as a cofactor.

It localises to the plastid. It is found in the chloroplast. It carries out the reaction RNA(n) + a ribonucleoside 5'-triphosphate = RNA(n+1) + diphosphate. In terms of biological role, DNA-dependent RNA polymerase catalyzes the transcription of DNA into RNA using the four ribonucleoside triphosphates as substrates. The protein is DNA-directed RNA polymerase subunit beta' of Nasturtium officinale (Watercress).